The following is a 125-amino-acid chain: Protein ApaG (125 aa).

The ApaG domain maps to 1-125 (MINSPRVCIQ…FRLAVPTLIH (125 aa)).

The chain is Protein ApaG from Salmonella arizonae (strain ATCC BAA-731 / CDC346-86 / RSK2980).